Reading from the N-terminus, the 345-residue chain is Methylthioribose-1-phosphate isomerase (345 aa).

Substrate is bound by residues 44–46, R87, and Q194; that span reads RGA. Residue D235 is the Proton donor of the active site. 245 to 246 lines the substrate pocket; sequence NK.

Belongs to the eIF-2B alpha/beta/delta subunits family. MtnA subfamily.

It carries out the reaction 5-(methylsulfanyl)-alpha-D-ribose 1-phosphate = 5-(methylsulfanyl)-D-ribulose 1-phosphate. It functions in the pathway amino-acid biosynthesis; L-methionine biosynthesis via salvage pathway; L-methionine from S-methyl-5-thio-alpha-D-ribose 1-phosphate: step 1/6. Its function is as follows. Catalyzes the interconversion of methylthioribose-1-phosphate (MTR-1-P) into methylthioribulose-1-phosphate (MTRu-1-P). This Heliobacterium modesticaldum (strain ATCC 51547 / Ice1) protein is Methylthioribose-1-phosphate isomerase.